Consider the following 875-residue polypeptide: MKSVLMVAEKPSLAASLAGILSNGRCTAKRGTGNGCSTHEWTGNFRNEGSVHFRMTSVCGHVMSLDFNKKYNCWDKVDPIQLFGCATEKKETNPKQNMRKFLAHEARGCDYLVLWLDCDKEGENICFEVMDAVKHVINNVYSDQVTYRAHFSAITEKDIKKAMETLGHPNENEAKSVDARQELDLRIGCAFTRFQTKFFQDRYGDLDSSLISYGPCQTPTLGFCVKRHDDIQTFKPESFWHLQLLAGQPEVTLEWARGRVFKKDIAIMLLNRVKEHKKATVESVASKEAYKSKPQALNTVELMRICSSGLGIGPFQAMQIAERLYTQGYISYPRTETNQYPTNFDLPAVLHVLKPSADFGEEARSILGDIQTPRKGKDAGDHPPITPMKLGNRSDFDRDTWRVYEFICRHFMGTVSRDLKYRVTTAKLSVGMETFSCTASVLIDAGFTKVMTWSAFGKDEPQPPFVQGTQVAINDVRLIESQTGPPDYLTESELITLMEEHGIGTDASIPVHINNICQRNYVHIENGRKLMPTTLGIVLVHGYQKIDPELVLPTMRTEVERMLTLIAQGSANFQDVLRHAIKIFKLKFMYFVKNIDSMDALFEVSFSPLAESGKAHSRCGKCRRYMKYIQTKPARLHCSHCDETYALPIGNVKVYREFKCPLDDFDLLAFSTGVKGRSYPFCPYCYNHPPFSDMPHLGGCNTCTNANCPHSLNTLGISSCVECPTGVLVLDCTLAPTWKLGCNRCDVIINCFKGATKITVEEAKCQECGAQQVNVVYKSDKSKFKDGSEEKSGCIFCSADFSHLVEKHRAVASRPVRSGGGFRGGKAGRGGGGMGGAAFGSGGAVTAGGGPNAGGGVRGSRVAKDKMGQLASYFV.

The Toprim domain occupies 3-153 (SVLMVAEKPS…QVTYRAHFSA (151 aa)). The 420-residue stretch at 170–589 (NENEAKSVDA…AIKIFKLKFM (420 aa)) folds into the Topo IA-type catalytic domain. Residue tyrosine 332 is the O-(5'-phospho-DNA)-tyrosine intermediate of the active site. The tract at residues 371-391 (QTPRKGKDAGDHPPITPMKLG) is disordered.

It belongs to the type IA topoisomerase family.

It carries out the reaction ATP-independent breakage of single-stranded DNA, followed by passage and rejoining.. Releases the supercoiling and torsional tension of DNA introduced during the DNA replication and transcription by transiently cleaving and rejoining one strand of the DNA duplex. Introduces a single-strand break via transesterification at a target site in duplex DNA. The scissile phosphodiester is attacked by the catalytic tyrosine of the enzyme, resulting in the formation of a DNA-(5'-phosphotyrosyl)-enzyme intermediate and the expulsion of a 3'-OH DNA strand. The free DNA strand than undergoes passage around the unbroken strand thus removing DNA supercoils. Finally, in the religation step, the DNA 3'-OH attacks the covalent intermediate to expel the active-site tyrosine and restore the DNA phosphodiester backbone. Weakly relaxes negative supercoils and displays a distinct preference for binding single-stranded DNA. The protein is DNA topoisomerase 3-beta (Top3beta) of Drosophila melanogaster (Fruit fly).